The following is an 820-amino-acid chain: Phosphoenolpyruvate synthase (820 aa).

The active-site Tele-phosphohistidine intermediate is the His-438. Substrate is bound by residues Arg-539, Arg-587, Glu-689, Gly-710, Ser-711, Asn-712, and Asp-713. Residue Glu-689 participates in Mg(2+) binding. Asp-713 is a Mg(2+) binding site. Residue Cys-762 is the Proton donor of the active site.

This sequence belongs to the PEP-utilizing enzyme family. The cofactor is Mg(2+).

The enzyme catalyses pyruvate + ATP + H2O = phosphoenolpyruvate + AMP + phosphate + 2 H(+). It functions in the pathway carbohydrate biosynthesis; gluconeogenesis. Its function is as follows. Catalyzes the phosphorylation of pyruvate to phosphoenolpyruvate. This Aeropyrum pernix (strain ATCC 700893 / DSM 11879 / JCM 9820 / NBRC 100138 / K1) protein is Phosphoenolpyruvate synthase (ppsA).